We begin with the raw amino-acid sequence, 435 residues long: Galactomannan galactosyltransferase 1 (435 aa).

Topologically, residues 1–20 are cytoplasmic; the sequence is MAKFGSRNKSPKWISNGCCF. A helical; Signal-anchor for type II membrane protein membrane pass occupies residues 21–41; sequence LLGAFTALLLLWGLCSFIIPI. Topologically, residues 42 to 435 are lumenal; sequence PNTDPKLNSV…SPLPFGYPAA (394 aa). Residues N230 and N328 are each glycosylated (N-linked (GlcNAc...) asparagine). A coiled-coil region spans residues 321-354; it reads EIVKTYENISERYDEVERKVEGLRRRHAEKVSEK.

This sequence belongs to the glycosyltransferase 34 family.

The protein localises to the golgi apparatus membrane. Galactomannan galactosyltransferase (GMGT) involved in galactomannan biosynthesis in seed endosperm. GMGT specificity is an important factor regulating the distribution and amount of alpha-1,6-galactose (Gal) substitution of the beta-1,4-linked mannan backbone. The chain is Galactomannan galactosyltransferase 1 (GMGT1) from Cyamopsis tetragonoloba (Guar).